Consider the following 718-residue polypeptide: LON peptidase N-terminal domain and RING finger protein 3 (718 aa).

The segment at 1–69 (MESLRTEQML…PGTSTPESKV (69 aa)) is disordered. A compositionally biased stretch (polar residues) spans 57–66 (EQSPGTSTPE). Residues 67–100 (SKVLLTQADALASRGRIREALEVYRQLSERQQLV) form a TPR 1 repeat. Residues 158 to 196 (CRKCHGFLSDPVSLSCGHTFCKLCLERGRAADRRCALCG) form an RING-type 1 zinc finger. TPR repeat units lie at residues 243–276 (ASQL…APND) and 278–310 (LLYS…RPMG). Positions 322-413 (SQEEAAARGD…TDQGDKPALS (92 aa)) are disordered. The span at 339–352 (AKVKGDGQQHHMKD) shows a compositional bias: basic and acidic residues. The RING-type 2 zinc-finger motif lies at 426–464 (CALCMRLFYEPVTTPCGHTFCLKCLERCLDHNAKCPLCK). Residues 505-714 (MEELSNLNKN…GIRRVLAFIS (210 aa)) form the Lon N-terminal domain.

The polypeptide is LON peptidase N-terminal domain and RING finger protein 3 (LONRF3) (Macaca fascicularis (Crab-eating macaque)).